The following is a 672-amino-acid chain: Leucine-rich repeat receptor-like protein kinase PXC1 (672 aa).

Positions 1–21 (MAAKPLLLPLLLLLHLSITLA) are cleaved as a signal peptide. Residues 22-269 (QNDTNALTLF…IHSHRGIKPG (248 aa)) lie on the Extracellular side of the membrane. Asn-23, Asn-44, and Asn-101 each carry an N-linked (GlcNAc...) asparagine glycan. An LRR 1 repeat occupies 87-110 (LDQLRLLDLHDNRLNGTVSPLTNC). Lys-111 participates in a covalent cross-link: Glycyl lysine isopeptide (Lys-Gly) (interchain with G-Cter in ubiquitin). LRR repeat units lie at residues 112 to 134 (NLRL…ISFL), 135 to 158 (KRMI…ILGF), 160 to 181 (RVLT…FSQM), and 182 to 205 (KSLL…VVKK). N-linked (GlcNAc...) asparagine glycans are attached at residues Asn-188 and Asn-197. Residues 233–249 (ESSNTDQIVPSNPTSIP) show a composition bias toward polar residues. The tract at residues 233–254 (ESSNTDQIVPSNPTSIPHSPVS) is disordered. A helical membrane pass occupies residues 270–290 (IIAAVIGGCVAVIVLVSFGFA). Topologically, residues 291-672 (FCCGRLDRNG…MSPSLATTDG (382 aa)) are cytoplasmic. Positions 300–333 (GERSKSGSVETGFVGGGEGKRRSSYGEGGESDAT) are disordered. The region spanning 357–645 (KASAEMLGKG…AEVVKMVEEI (289 aa)) is the Protein kinase domain. Residues 363 to 371 (LGKGSLGTV) and Lys-386 each bind ATP. The interval 650–672 (SPVGEDFDESRNSMSPSLATTDG) is disordered. Residues 661–672 (NSMSPSLATTDG) are compositionally biased toward polar residues.

Belongs to the protein kinase superfamily. Ser/Thr protein kinase family. In terms of tissue distribution, expressed in the vascular strands of cotyledons, the shoot apex, hypocotyls, roots, leaves, stems and flowers.

It localises to the cell membrane. Functionally, leucine-rich repeat receptor-like protein kinase involved in secondary cell wall formation in xylem fibers. May play a role in a regulatory network which also incorporates the TDR/PXY signaling pathway and regulates the maturation of interfascicular fiber cells. May promote the initiation of secondary cell wall deposition during the procedure of cell expansion. This chain is Leucine-rich repeat receptor-like protein kinase PXC1, found in Arabidopsis thaliana (Mouse-ear cress).